The sequence spans 769 residues: 5-methyltetrahydropteroyltriglutamate--homocysteine methyltransferase (769 aa).

5-methyltetrahydropteroyltri-L-glutamate contacts are provided by residues 16–19 (RELK) and Lys121. The tract at residues 415–450 (SMTERDSPHSSRSPLQREALDLPTLPTTTIGSFPQT) is disordered. Polar residues predominate over residues 439–449 (LPTTTIGSFPQ). L-homocysteine-binding positions include 444–446 (IGS) and Glu497. L-methionine-binding positions include 444-446 (IGS) and Glu497. 5-methyltetrahydropteroyltri-L-glutamate is bound by residues 528–529 (RC) and Trp574. L-homocysteine is bound at residue Asp612. Asp612 is an L-methionine binding site. Residue Glu618 coordinates 5-methyltetrahydropteroyltri-L-glutamate. His654, Cys656, and Glu678 together coordinate Zn(2+). His707 serves as the catalytic Proton donor. Cys739 contacts Zn(2+).

This sequence belongs to the vitamin-B12 independent methionine synthase family. Zn(2+) serves as cofactor.

The catalysed reaction is 5-methyltetrahydropteroyltri-L-glutamate + L-homocysteine = tetrahydropteroyltri-L-glutamate + L-methionine. It participates in amino-acid biosynthesis; L-methionine biosynthesis via de novo pathway; L-methionine from L-homocysteine (MetE route): step 1/1. In terms of biological role, catalyzes the transfer of a methyl group from 5-methyltetrahydrofolate to homocysteine resulting in methionine formation. The sequence is that of 5-methyltetrahydropteroyltriglutamate--homocysteine methyltransferase from Salinibacter ruber (strain DSM 13855 / M31).